We begin with the raw amino-acid sequence, 623 residues long: Glutathione import ATP-binding protein GsiA (623 aa).

2 ABC transporter domains span residues 15-269 (VSGL…QTLL) and 325-564 (LRSG…RKLM). ATP is bound by residues 49-56 (GESGSGKS) and 357-364 (GESGSGKS).

The protein belongs to the ABC transporter superfamily. Glutathione importer (TC 3.A.1.5.11) family. As to quaternary structure, the complex is composed of two ATP-binding proteins (GsiA), two transmembrane proteins (GsiC and GsiD) and a solute-binding protein (GsiB).

The protein localises to the cell inner membrane. It carries out the reaction glutathione(out) + ATP + H2O = glutathione(in) + ADP + phosphate + H(+). Its function is as follows. Part of the ABC transporter complex GsiABCD involved in glutathione import. Responsible for energy coupling to the transport system. The protein is Glutathione import ATP-binding protein GsiA of Salmonella choleraesuis (strain SC-B67).